We begin with the raw amino-acid sequence, 149 residues long: Protein-export protein SecB 2 (149 aa).

This sequence belongs to the SecB family. Homotetramer, a dimer of dimers. One homotetramer interacts with 1 SecA dimer.

It localises to the cytoplasm. Its function is as follows. One of the proteins required for the normal export of preproteins out of the cell cytoplasm. It is a molecular chaperone that binds to a subset of precursor proteins, maintaining them in a translocation-competent state. It also specifically binds to its receptor SecA. This Francisella tularensis subsp. tularensis (strain FSC 198) protein is Protein-export protein SecB 2.